Consider the following 517-residue polypeptide: Amidophosphoribosyltransferase (517 aa).

Methionine 1 is modified (N-acetylmethionine). A propeptide spanning residues 1–11 (MELEELGIREE) is cleaved from the precursor. Cysteine 12 functions as the Nucleophile in the catalytic mechanism. Positions 12–261 (CGVFGCIASG…PGEIVEISRH (250 aa)) constitute a Glutamine amidotransferase type-2 domain. Residue cysteine 280 participates in [4Fe-4S] cluster binding. 3 residues coordinate Mg(2+): serine 327, aspartate 389, and aspartate 390. [4Fe-4S] cluster is bound by residues cysteine 426, cysteine 503, and cysteine 506.

This sequence in the C-terminal section; belongs to the purine/pyrimidine phosphoribosyltransferase family. In terms of assembly, homotetramer. Requires Mg(2+) as cofactor. It depends on [4Fe-4S] cluster as a cofactor. In terms of tissue distribution, ubiquitously expressed.

It carries out the reaction 5-phospho-beta-D-ribosylamine + L-glutamate + diphosphate = 5-phospho-alpha-D-ribose 1-diphosphate + L-glutamine + H2O. The protein operates within purine metabolism; IMP biosynthesis via de novo pathway; N(1)-(5-phospho-D-ribosyl)glycinamide from 5-phospho-alpha-D-ribose 1-diphosphate: step 1/2. In terms of biological role, catalyzes the formation of phosphoribosylamine from phosphoribosylpyrophosphate (PRPP) and glutamine. The polypeptide is Amidophosphoribosyltransferase (PPAT) (Homo sapiens (Human)).